Consider the following 638-residue polypeptide: Growth hormone receptor (638 aa).

The N-terminal stretch at 1–18 (MDLWQLLLTLALAGSSDA) is a signal peptide. At 19–264 (FSGSEPTAAI…NQFTCEEDFY (246 aa)) the chain is on the extracellular side. Residue asparagine 46 is glycosylated (N-linked (GlcNAc...) asparagine). Disulfide bonds link cysteine 56-cysteine 66 and cysteine 101-cysteine 112. An N-linked (GlcNAc...) asparagine glycan is attached at asparagine 115. An intrachain disulfide couples cysteine 126 to cysteine 140. A Fibronectin type-III domain is found at 151–254 (PPIALNWTLL…EVLYVTLPQM (104 aa)). 3 N-linked (GlcNAc...) asparagine glycosylation sites follow: asparagine 156, asparagine 161, and asparagine 200. Positions 240-244 (YGEFS) match the WSXWS motif motif. A helical membrane pass occupies residues 265–288 (FPWLLIIIFGIFGLTVMLFVFLFS). Residues 289–638 (KQQRIKMLIL…STDQLNKIMP (350 aa)) are Cytoplasmic-facing. Positions 294–379 (KMLILPPVPV…HQKSHSNLGV (86 aa)) are required for JAK2 binding. A Box 1 motif motif is present at residues 297 to 305 (ILPPVPVPK). Positions 340-349 (DSWVEFIELD) match the UbE motif motif. Serine 341 bears the Phosphoserine mark. A disordered region spans residues 353-388 (PDEKNEGSDTDRLLSSDHQKSHSNLGVKDGDSGRTS). Residues 356–372 (KNEGSDTDRLLSSDHQK) are compositionally biased toward basic and acidic residues. A phosphotyrosine mark is found at tyrosine 487 and tyrosine 595.

Belongs to the type I cytokine receptor family. Type 1 subfamily. On growth hormone (GH) binding, forms homodimers and binds JAK2 via a box 1-containing domain. The soluble form (GHBP) is produced by phorbol ester-promoted proteolytic cleavage at the cell surface (shedding) by ADAM17/TACE. Shedding is inhibited by growth hormone (GH) binding to the receptor probably due to a conformational change in GHR rendering the receptor inaccessible to ADAM17. Post-translationally, on GH binding, phosphorylated on tyrosine residues in the cytoplasmic domain by JAK2. In terms of processing, ubiquitinated by the ECS(SOCS2) complex following ligand-binding and phosphorylation by JAK2, leading to its degradation by the proteasome. Regulation by the ECS(SOCS2) complex acts as a negative feedback loop of growth hormone receptor signaling. Ubiquitination is not sufficient for GHR internalization.

Its subcellular location is the cell membrane. It is found in the secreted. Receptor for pituitary gland growth hormone (GH1) involved in regulating postnatal body growth. On ligand binding, couples to the JAK2/STAT5 pathway. In terms of biological role, the soluble form (GHBP) acts as a reservoir of growth hormone in plasma and may be a modulator/inhibitor of GH signaling. This is Growth hormone receptor (GHR) from Papio anubis (Olive baboon).